A 463-amino-acid chain; its full sequence is Nuclear hormone receptor family member nhr-79 (463 aa).

A DNA-binding region (nuclear receptor) is located at residues 3–81 (RGKCMVCDSP…AGMMRDLVQA (79 aa)). 2 consecutive NR C4-type zinc fingers follow at residues 6 to 27 (CMVC…CKAC) and 43 to 64 (CLGD…CRHC). The interval 83-119 (REIKSDKGKNSRNSSQSEDFFSPPPEQPGPSNYFDQF) is disordered. Positions 203–463 (YTEQVINLNM…ILKDMLKFQY (261 aa)) constitute an NR LBD domain.

The protein belongs to the nuclear hormone receptor family.

Its subcellular location is the nucleus. Functionally, orphan nuclear receptor. The sequence is that of Nuclear hormone receptor family member nhr-79 (nhr-79) from Caenorhabditis elegans.